The following is a 294-amino-acid chain: 4-diphosphocytidyl-2-C-methyl-D-erythritol kinase (294 aa).

K19 is a catalytic residue. 106–116 is an ATP binding site; sequence PVASGIGGGSA. D148 is an active-site residue.

The protein belongs to the GHMP kinase family. IspE subfamily.

The enzyme catalyses 4-CDP-2-C-methyl-D-erythritol + ATP = 4-CDP-2-C-methyl-D-erythritol 2-phosphate + ADP + H(+). The protein operates within isoprenoid biosynthesis; isopentenyl diphosphate biosynthesis via DXP pathway; isopentenyl diphosphate from 1-deoxy-D-xylulose 5-phosphate: step 3/6. Functionally, catalyzes the phosphorylation of the position 2 hydroxy group of 4-diphosphocytidyl-2C-methyl-D-erythritol. The protein is 4-diphosphocytidyl-2-C-methyl-D-erythritol kinase of Rhizobium etli (strain ATCC 51251 / DSM 11541 / JCM 21823 / NBRC 15573 / CFN 42).